Reading from the N-terminus, the 125-residue chain is Diol dehydratase-reactivating factor small subunit (125 aa).

Mg(2+) is bound at residue glutamate 31.

Belongs to the DdrB/PduH family. In terms of assembly, component of the DDR complex, a heterotetramer of DdrA(2)/DdrB(2). The DDR complex interacts with the diol dehydratase complex in the presence of ADP but not ATP. It depends on Mg(2+) as a cofactor.

It catalyses the reaction ATP + H2O = ADP + phosphate + H(+). Its function is as follows. Small subunit of the diol dehydratase-reactivating factor (DDR), which reactivates suicidally inhibited adenosylcobalamin-dependent diol dehydratase (DD, pddA, pddB, pddC). DDR acts as a chaperone, reactivates inactivated DD holoenzyme in the presence of ATP, Mg(2+) and free adenosylcobalamin (AdoCbl), by mediating the exchange of the tightly bound damaged cofactor AdoCbl for a free intact one. Reactivation takes place in two steps: ADP-dependent cobalamin release, and ATP-dependent dissociation of the DD apoenzyme-DDR complex. DDR has weak ATPase activity which is required for DD reactivation. Activates glycerol-inactivated, O2-inactivated holoenzyme and inactivated enzyme-cyanocobalamin complex. Also reactivates glycerol-inactivated hologlycerol dehydratase, a DD isozyme. The polypeptide is Diol dehydratase-reactivating factor small subunit (Klebsiella michiganensis (strain ATCC 8724 / DSM 4798 / JCM 20051 / NBRC 3318 / NRRL B-199 / KCTC 1686 / BUCSAV 143 / CCM 1901)).